Consider the following 553-residue polypeptide: Solute carrier family 45 member 3 (553 aa).

Helical transmembrane passes span 19–39 (LLVN…ITYV), 52–72 (FMTM…PLLG), 88–108 (FIWA…RAGW), 120–140 (LELA…QVCF), 161–181 (YSVY…LPAI), 198–218 (CLFG…LLVA), 275–295 (FVAE…YTDF), 323–343 (MGSL…LVMD), 353–373 (AVYL…CLSH), 382–402 (AALT…LASL), and 522–542 (AYMV…TQVV).

The protein belongs to the glycoside-pentoside-hexuronide (GPH) cation symporter transporter (TC 2.A.2) family. As to expression, prostate specific. Expressed in all prostatic glandular cells. Expressed both in normal and cancerous prostates.

It localises to the membrane. It catalyses the reaction sucrose(out) + H(+)(out) = sucrose(in) + H(+)(in). In terms of biological role, proton-associated sucrose transporter. May be able to transport also glucose and fructose. The sequence is that of Solute carrier family 45 member 3 from Homo sapiens (Human).